Reading from the N-terminus, the 55-residue chain is Large ribosomal subunit protein bL33 (55 aa).

Belongs to the bacterial ribosomal protein bL33 family.

The polypeptide is Large ribosomal subunit protein bL33 (Aliivibrio fischeri (strain ATCC 700601 / ES114) (Vibrio fischeri)).